Reading from the N-terminus, the 1612-residue chain is DNA (cytosine-5)-methyltransferase PliMCI (1612 aa).

The DMAP1-binding domain occupies 7–101; it reads CDQVIPPNVR…NGDTKEEASS (95 aa). Residues 87–338 form a disordered region; the sequence is TCSPVNGDTK…TAESKQPPLR (252 aa). Positions 94 to 110 are enriched in basic and acidic residues; sequence DTKEEASSNGKDDEKAE. The segment covering 115 to 131 has biased composition (low complexity); sequence NGTTSNGSTTNGSSGSS. A compositionally biased stretch (polar residues) spans 132–142; sequence KANGHTNGGYV. Over residues 143 to 154 the composition is skewed to low complexity; it reads QSSSQEETGTSQ. 3 stretches are compositionally biased toward basic and acidic residues: residues 193–212, 222–232, and 260–289; these read VLGDDERDGVEKKEGEKKDV, EESATPDEKTL, and KKEEEKMEESSSMEVDKKEMENGDNGKKEE. The segment at 626–672 adopts a CXXC-type zinc-finger fold; the sequence is ASERKKRCGVCEICQAPDCGKCTACKDMIKFGGSGKAKQACKDRRCP. Zn(2+)-binding residues include Cys633, Cys636, Cys639, Cys644, Cys647, Cys650, Cys666, and Cys671. The interval 677–708 is disordered; sequence QEADENDIDEMDNSSNKENKDEKKAKKGRKLE. Acidic residues predominate over residues 678–688; it reads EADENDIDEMD. Residues 691-708 are compositionally biased toward basic and acidic residues; that stretch reads SNKENKDEKKAKKGRKLE. 2 BAH domains span residues 743–871 and 967–1089; these read EKIE…EDYE and NYRK…EDPP. The segment at 1084–1121 is disordered; the sequence is CFEDPPSKSRSTRMKGKGKGKGKGKAKGKIAVEKEEEK. Basic residues predominate over residues 1093–1111; the sequence is RSTRMKGKGKGKGKGKAKG. The 460-residue stretch at 1131–1590 folds into the SAM-dependent MTase C5-type domain; the sequence is LKCLDVFAGC…MEIKVCLQTK (460 aa). Residues 1142–1143, 1160–1161, 1182–1183, and Cys1183 contribute to the S-adenosyl-L-methionine site; these read GL, EK, and DC. Cys1218 is an active-site residue. S-adenosyl-L-methionine contacts are provided by Asn1569 and Val1571.

Belongs to the class I-like SAM-binding methyltransferase superfamily. C5-methyltransferase family.

It localises to the nucleus. The catalysed reaction is a 2'-deoxycytidine in DNA + S-adenosyl-L-methionine = a 5-methyl-2'-deoxycytidine in DNA + S-adenosyl-L-homocysteine + H(+). In terms of biological role, methylates CpG residues. The sequence is that of DNA (cytosine-5)-methyltransferase PliMCI (DNMT) from Paracentrotus lividus (Common sea urchin).